We begin with the raw amino-acid sequence, 180 residues long: MDLPDVTAVQNESRQLALASSAAELHGGLCGWLSGGGADSADWLARILADTGQVAPKQGGALDQLRQATVAQMEDRDFAFELLLVEDGAPLAARTDALFDWCRAFLGGFGLAAQQRPALSEEGEEALQDLARLAQASSDDFDAADEDDTALAEIEEFVRVAVLLLHGDCVMGPRFRQRLN.

It belongs to the UPF0149 family.

In Xanthomonas oryzae pv. oryzae (strain MAFF 311018), this protein is UPF0149 protein XOO1028.